We begin with the raw amino-acid sequence, 264 residues long: MSEKLKLHGFNNLTKSLSFNIYDICYAQSEKHRQEYIAYIDEQYNAERLTQILTDVVEIIGAHILNVSRQDYDPHGASVTMLIAEHEVPPPADSSEESPGPLPDAVVAHLDKSHVTVHTYPESHPDNGISTFRADIDVSTCGLISPLKALNYLIHSFDSDIVTIDYRVRGFTRDIDGAKLYIDHDINSIQNFLSEDTQEAYQMIDVNVYQENLFHTKMILKEFNLDNYLFGTGVSELNANEASNIRERLQKEMLEIFYSRNMPY.

The active-site Schiff-base intermediate with substrate; via pyruvic acid is Ser113. Ser113 carries the pyruvic acid (Ser); by autocatalysis modification. His118 serves as the catalytic Proton acceptor; for processing activity. The active-site Proton donor; for catalytic activity is Cys141.

The protein belongs to the prokaryotic AdoMetDC family. Type 2 subfamily. In terms of assembly, heterooctamer of four alpha and four beta chains arranged as a tetramer of alpha/beta heterodimers. The cofactor is pyruvate. Is synthesized initially as an inactive proenzyme. Formation of the active enzyme involves a self-maturation process in which the active site pyruvoyl group is generated from an internal serine residue via an autocatalytic post-translational modification. Two non-identical subunits are generated from the proenzyme in this reaction, and the pyruvate is formed at the N-terminus of the alpha chain, which is derived from the carboxyl end of the proenzyme. The post-translation cleavage follows an unusual pathway, termed non-hydrolytic serinolysis, in which the side chain hydroxyl group of the serine supplies its oxygen atom to form the C-terminus of the beta chain, while the remainder of the serine residue undergoes an oxidative deamination to produce ammonia and the pyruvoyl group blocking the N-terminus of the alpha chain.

The enzyme catalyses S-adenosyl-L-methionine + H(+) = S-adenosyl 3-(methylsulfanyl)propylamine + CO2. The protein operates within amine and polyamine biosynthesis; S-adenosylmethioninamine biosynthesis; S-adenosylmethioninamine from S-adenosyl-L-methionine: step 1/1. In terms of biological role, catalyzes the decarboxylation of S-adenosylmethionine to S-adenosylmethioninamine (dcAdoMet), the propylamine donor required for the synthesis of the polyamines spermine and spermidine from the diamine putrescine. The sequence is that of S-adenosylmethionine decarboxylase proenzyme from Hahella chejuensis (strain KCTC 2396).